The following is a 187-amino-acid chain: Orotate phosphoribosyltransferase (187 aa).

Residue 110-118 (EDVVTTGGS) participates in 5-phospho-alpha-D-ribose 1-diphosphate binding. Thr-114 and Arg-142 together coordinate orotate.

This sequence belongs to the purine/pyrimidine phosphoribosyltransferase family. PyrE subfamily. In terms of assembly, homodimer. Mg(2+) serves as cofactor.

The enzyme catalyses orotidine 5'-phosphate + diphosphate = orotate + 5-phospho-alpha-D-ribose 1-diphosphate. Its pathway is pyrimidine metabolism; UMP biosynthesis via de novo pathway; UMP from orotate: step 1/2. Its function is as follows. Catalyzes the transfer of a ribosyl phosphate group from 5-phosphoribose 1-diphosphate to orotate, leading to the formation of orotidine monophosphate (OMP). This chain is Orotate phosphoribosyltransferase, found in Thermotoga maritima (strain ATCC 43589 / DSM 3109 / JCM 10099 / NBRC 100826 / MSB8).